Here is a 461-residue protein sequence, read N- to C-terminus: Photosystem II CP43 reaction center protein (461 aa).

The propeptide occupies 1–2 (ME). Thr-3 bears the N-acetylthreonine mark. Thr-3 carries the post-translational modification Phosphothreonine. The next 5 membrane-spanning stretches (helical) occupy residues 57–81 (LFEV…PHLA), 122–143 (LIGP…KDKN), 166–188 (KALY…RIIT), 243–263 (QPWA…LSYS), and 279–300 (WFNN…ASQS). [CaMn4O5] cluster is bound at residue Glu-355. The helical transmembrane segment at 435-459 (RARAAAAGFEKGIDRFNEPTLSLRP) threads the bilayer.

Belongs to the PsbB/PsbC family. PsbC subfamily. In terms of assembly, PSII is composed of 1 copy each of membrane proteins PsbA, PsbB, PsbC, PsbD, PsbE, PsbF, PsbH, PsbI, PsbJ, PsbK, PsbL, PsbM, PsbT, PsbX, PsbY, PsbZ, Psb30/Ycf12, at least 3 peripheral proteins of the oxygen-evolving complex and a large number of cofactors. It forms dimeric complexes. It depends on Binds multiple chlorophylls and provides some of the ligands for the Ca-4Mn-5O cluster of the oxygen-evolving complex. It may also provide a ligand for a Cl- that is required for oxygen evolution. PSII binds additional chlorophylls, carotenoids and specific lipids. as a cofactor.

It is found in the plastid. The protein resides in the chloroplast thylakoid membrane. In terms of biological role, one of the components of the core complex of photosystem II (PSII). It binds chlorophyll and helps catalyze the primary light-induced photochemical processes of PSII. PSII is a light-driven water:plastoquinone oxidoreductase, using light energy to abstract electrons from H(2)O, generating O(2) and a proton gradient subsequently used for ATP formation. In Oedogonium cardiacum (Filamentous green alga), this protein is Photosystem II CP43 reaction center protein.